A 152-amino-acid polypeptide reads, in one-letter code: Ribonuclease pancreatic gamma-type (152 aa).

The first 25 residues, 1–25 (MGLEKSFILFSLLVLVLGCVQPSLV), serve as a signal peptide directing secretion. A disordered region spans residues 26 to 48 (GESKESPSEKFKRRHMDEEGPYQ). The segment covering 27 to 43 (ESKESPSEKFKRRHMDE) has biased composition (basic and acidic residues). Residues Lys35 and Arg38 each contribute to the substrate site. The active-site Proton acceptor is His40. Disulfide bonds link Cys54-Cys112, Cys68-Cys123, Cys86-Cys138, and Cys93-Cys100. Substrate-binding positions include 69–73 (KPLNT) and Lys94. His147 acts as the Proton donor in catalysis.

This sequence belongs to the pancreatic ribonuclease family. Monomer.

It localises to the secreted. The enzyme catalyses an [RNA] containing cytidine + H2O = an [RNA]-3'-cytidine-3'-phosphate + a 5'-hydroxy-ribonucleotide-3'-[RNA].. It catalyses the reaction an [RNA] containing uridine + H2O = an [RNA]-3'-uridine-3'-phosphate + a 5'-hydroxy-ribonucleotide-3'-[RNA].. In terms of biological role, endonuclease that catalyzes the cleavage of RNA on the 3' side of pyrimidine nucleotides. Acts on single-stranded and double-stranded RNA. This chain is Ribonuclease pancreatic gamma-type, found in Rattus fuscipes (Bush rat).